The primary structure comprises 219 residues: Izumo sperm-egg fusion protein 4 (219 aa).

The N-terminal stretch at 1–15 (MALLLCLVGVTAALA) is a signal peptide. Asparagine 206 carries an N-linked (GlcNAc...) asparagine glycan.

Belongs to the Izumo family.

It is found in the secreted. This chain is Izumo sperm-egg fusion protein 4 (IZUMO4), found in Macaca fascicularis (Crab-eating macaque).